The sequence spans 836 residues: Sucrose synthase 5 (836 aa).

The segment at 270–748 (RIFNVVIFSV…GLQRINECYT (479 aa)) is GT-B glycosyltransferase. The interval 805–836 (PPPLPPKPLVKPSASKGSKRTQPRLSFRLFGA) is disordered.

It belongs to the glycosyltransferase 1 family. Plant sucrose synthase subfamily. As to expression, detected in the whole plant but more precisely confined to the vasculature in cotyledons, leaves, petals, anthers and roots. Also detected in developing siliques, young immature rosette and cauline leaves.

The protein resides in the secreted. It localises to the cell wall. The enzyme catalyses an NDP-alpha-D-glucose + D-fructose = a ribonucleoside 5'-diphosphate + sucrose + H(+). Its function is as follows. Sucrose-cleaving enzyme that provides UDP-glucose and fructose for various metabolic pathways. Functions in callose synthesis at the site of phloem sieve elements. The polypeptide is Sucrose synthase 5 (SUS5) (Arabidopsis thaliana (Mouse-ear cress)).